The chain runs to 392 residues: Protein-glutamate methylesterase/protein-glutamine glutaminase (392 aa).

Residues 9 to 126 (TVLIVDDSPF…GADIQALARD (118 aa)) form the Response regulatory domain. At D60 the chain carries 4-aspartylphosphate. Positions 148–194 (VSRISSASGSRPPWTAGAASENTNRLSSPGSTSSTLGSAKGRSLDSG) are disordered. Low complexity predominate over residues 173 to 185 (LSSPGSTSSTLGS). In terms of domain architecture, CheB-type methylesterase spans 198-392 (PKYPVEIVAI…RHIVECVQRR (195 aa)). Residues S210, H237, and D334 contribute to the active site.

This sequence belongs to the CheB family. In terms of processing, phosphorylated by CheA. Phosphorylation of the N-terminal regulatory domain activates the methylesterase activity.

Its subcellular location is the cytoplasm. The enzyme catalyses [protein]-L-glutamate 5-O-methyl ester + H2O = L-glutamyl-[protein] + methanol + H(+). The catalysed reaction is L-glutaminyl-[protein] + H2O = L-glutamyl-[protein] + NH4(+). Its function is as follows. Involved in chemotaxis. Part of a chemotaxis signal transduction system that modulates chemotaxis in response to various stimuli. Catalyzes the demethylation of specific methylglutamate residues introduced into the chemoreceptors (methyl-accepting chemotaxis proteins or MCP) by CheR. Also mediates the irreversible deamidation of specific glutamine residues to glutamic acid. This chain is Protein-glutamate methylesterase/protein-glutamine glutaminase, found in Desulfitobacterium hafniense (strain Y51).